The following is a 265-amino-acid chain: Glutamate racemase (265 aa).

Substrate is bound by residues 9–10 (DS) and 41–42 (YG). Cys72 acts as the Proton donor/acceptor in catalysis. 73-74 (NT) is a substrate binding site. Cys183 serves as the catalytic Proton donor/acceptor. 184-185 (TH) serves as a coordination point for substrate.

The protein belongs to the aspartate/glutamate racemases family.

The catalysed reaction is L-glutamate = D-glutamate. Its pathway is cell wall biogenesis; peptidoglycan biosynthesis. In terms of biological role, provides the (R)-glutamate required for cell wall biosynthesis. The protein is Glutamate racemase of Lysinibacillus sphaericus (Bacillus sphaericus).